The chain runs to 573 residues: Adenine deaminase (573 aa).

This sequence belongs to the metallo-dependent hydrolases superfamily. Adenine deaminase family. Mn(2+) serves as cofactor.

The enzyme catalyses adenine + H2O + H(+) = hypoxanthine + NH4(+). This is Adenine deaminase from Bacillus licheniformis (strain ATCC 14580 / DSM 13 / JCM 2505 / CCUG 7422 / NBRC 12200 / NCIMB 9375 / NCTC 10341 / NRRL NRS-1264 / Gibson 46).